The following is a 208-amino-acid chain: MAAYAAFKHVELYNVGKAKKRVLRPPGGGSSDIFGSEMPQTPRNVKNRMASNIFAAEKDNGVKNNVRQGAHRFYFIGDAPRRGQKTVDSHSRLFGEPTRPITPGKNHMKSSIPFGQNTEAVAAQKLLTTNGHYNGKSGSVSSASSSVSSSTENLKMNSGSRSEGNPVTGEGYKVVANEYSQRQESSNGGTPVINKNRIPPGGYSSGLW.

Disordered stretches follow at residues 24 to 43 (RPPG…QTPR) and 82 to 106 (RGQK…PGKN). Ser30 is modified (phosphoserine). Thr41 bears the Phosphothreonine mark. Residues 82–93 (RGQKTVDSHSRL) are compositionally biased toward basic and acidic residues. A phosphothreonine mark is found at Thr98 and Thr102. Ser111, Ser139, and Ser150 each carry phosphoserine. The segment at 132–208 (HYNGKSGSVS…PPGGYSSGLW (77 aa)) is disordered. The span at 137-150 (SGSVSSASSSVSSS) shows a compositional bias: low complexity. 2 stretches are compositionally biased toward polar residues: residues 151–165 (TENL…SEGN) and 178–189 (EYSQRQESSNGG).

Belongs to the MAP Jupiter family. In terms of tissue distribution, ubiquitous expression throughout development. Expressed during cell division in the syncytial embryo. Expressed in developing photoreceptors of the eye imaginal disk of the third larval stage. In adults, highly expressed in neurons of the brain, concentrated in axons. In the adult ovaries, expression accumulates in the germarium and the polar follicular cells as well as in the oocyte along the microtubule network.

It localises to the nucleus. It is found in the cytoplasm. The protein resides in the cytoskeleton. Its subcellular location is the spindle. Binds to all microtubule populations. The protein is Microtubule-associated protein Jupiter of Drosophila melanogaster (Fruit fly).